We begin with the raw amino-acid sequence, 834 residues long: DNA gyrase subunit A (834 aa).

A Topo IIA-type catalytic domain is found at 34 to 500 (LPDIRDGLKP…ADDIRDIEDI (467 aa)). Y122 acts as the O-(5'-phospho-DNA)-tyrosine intermediate in catalysis. Positions 527-533 (QRRGGHG) match the GyrA-box motif. The tract at residues 810 to 834 (LSSNENDDEVLSGSEEECSDTVSLR) is disordered. Residues 814–828 (ENDDEVLSGSEEECS) show a composition bias toward acidic residues.

Belongs to the type II topoisomerase GyrA/ParC subunit family. As to quaternary structure, heterotetramer, composed of two GyrA and two GyrB chains. In the heterotetramer, GyrA contains the active site tyrosine that forms a transient covalent intermediate with DNA, while GyrB binds cofactors and catalyzes ATP hydrolysis.

Its subcellular location is the cytoplasm. It carries out the reaction ATP-dependent breakage, passage and rejoining of double-stranded DNA.. In terms of biological role, a type II topoisomerase that negatively supercoils closed circular double-stranded (ds) DNA in an ATP-dependent manner to modulate DNA topology and maintain chromosomes in an underwound state. Negative supercoiling favors strand separation, and DNA replication, transcription, recombination and repair, all of which involve strand separation. Also able to catalyze the interconversion of other topological isomers of dsDNA rings, including catenanes and knotted rings. Type II topoisomerases break and join 2 DNA strands simultaneously in an ATP-dependent manner. This Chlamydia pneumoniae (Chlamydophila pneumoniae) protein is DNA gyrase subunit A.